Consider the following 391-residue polypeptide: Phosphoglycerate kinase (391 aa).

Substrate is bound by residues 21–23 (DLN), Arg-36, 59–62 (HLGR), Arg-113, and Arg-146. ATP is bound by residues Lys-197, Glu-319, and 345–348 (GGDT).

The protein belongs to the phosphoglycerate kinase family. In terms of assembly, monomer.

Its subcellular location is the cytoplasm. The enzyme catalyses (2R)-3-phosphoglycerate + ATP = (2R)-3-phospho-glyceroyl phosphate + ADP. Its pathway is carbohydrate degradation; glycolysis; pyruvate from D-glyceraldehyde 3-phosphate: step 2/5. In Xanthomonas oryzae pv. oryzae (strain PXO99A), this protein is Phosphoglycerate kinase.